The sequence spans 157 residues: Eukaryotic translation initiation factor 5A-1 (157 aa).

Lys-52 bears the Hypusine mark. 2 positions are modified to phosphoserine: Ser-75 and Ser-77. Thr-78 bears the Phosphothreonine mark.

Belongs to the eIF-5A family. In terms of processing, lys-52 undergoes hypusination, a unique post-translational modification that consists in the addition of a butylamino group from spermidine to lysine side chain, leading to the formation of the unusual amino acid hypusine. eIF-5As are the only known proteins to undergo this modification, which is essential for their function.

Its subcellular location is the cytoplasm. Functionally, translation factor that promotes translation elongation and termination, particularly upon ribosome stalling at specific amino acid sequence contexts. Binds between the exit (E) and peptidyl (P) site of the ribosome and promotes rescue of stalled ribosome: specifically required for efficient translation of polyproline-containing peptides as well as other motifs that stall the ribosome. Acts as a ribosome quality control (RQC) cofactor by joining the RQC complex to facilitate peptidyl transfer during CAT tailing step. The polypeptide is Eukaryotic translation initiation factor 5A-1 (tif51a) (Schizosaccharomyces pombe (strain 972 / ATCC 24843) (Fission yeast)).